Here is a 452-residue protein sequence, read N- to C-terminus: Eukaryotic translation initiation factor 4B3 (452 aa).

A2 carries the N-acetylalanine modification. Residues 20–282 are disordered; the sequence is EEHEAELKQQ…PSGGSRPRLV (263 aa). Over residues 28 to 37 the composition is skewed to polar residues; sequence QQPSPTNQKS. Positions 98-110 are enriched in basic and acidic residues; that stretch reads PRERSAEELDRSK. Positions 111–122 are enriched in gly residues; sequence LGGGFRSYGGGR. A compositionally biased stretch (low complexity) spans 126–136; that stretch reads ESSSSRWGSSR. A compositionally biased stretch (basic and acidic residues) spans 137–156; that stretch reads VSEDGERRGGGFNRDREPSR. 2 short sequence motifs (nuclear localization signal) span residues 172 to 179 and 215 to 222; these read AKKPISGN and PRRFVSSN. A compositionally biased stretch (basic and acidic residues) spans 227–243; sequence DRFEKRGSFESLSRNRD. A phosphoserine mark is found at S234, S270, and S300. A compositionally biased stretch (low complexity) spans 265 to 280; the sequence is GAANGSPPPSGGSRPR. Residues 349 to 452 are disordered; it reads AAMEKPNEKS…AKKEETEDKI (104 aa). Basic and acidic residues predominate over residues 369-386; that stretch reads GRKDEERIERSWRKSTEH. Acidic residues predominate over residues 387–397; the sequence is SEEDAQEEEPA. 2 stretches are compositionally biased toward basic and acidic residues: residues 400–419 and 441–452; these read GAKK…KKEE and EEAKKEETEDKI.

The protein belongs to the eIF-4 subunit B family. As to quaternary structure, homodimer. Nonspherical monomer. mRNA-discriminating component of initiation complexes. Interacts with MAD2. Post-translationally, phosphorylated.

The protein localises to the nucleus. Its function is as follows. Promotes the eIF4F and eIF4A RNA-dependent ATP-hydrolysis activity with different efficiency depending on mRNAs, thus providing mRNA discrimination during initiation of translation. This Arabidopsis thaliana (Mouse-ear cress) protein is Eukaryotic translation initiation factor 4B3.